The chain runs to 446 residues: tRNA-2-methylthio-N(6)-dimethylallyladenosine synthase (446 aa).

In terms of domain architecture, MTTase N-terminal spans 6–122; the sequence is RRYHITTFGC…LGDLLQQVFD (117 aa). 6 residues coordinate [4Fe-4S] cluster: Cys-15, Cys-51, Cys-85, Cys-157, Cys-161, and Cys-164. The 238-residue stretch at 143-380 folds into the Radical SAM core domain; that stretch reads RDSNITAWVN…NHLVATKAAE (238 aa). Positions 383-446 constitute a TRAM domain; that stretch reads QRYLGRIEEI…RPFSLTGVIF (64 aa).

This sequence belongs to the methylthiotransferase family. MiaB subfamily. In terms of assembly, monomer. [4Fe-4S] cluster is required as a cofactor.

It localises to the cytoplasm. It carries out the reaction N(6)-dimethylallyladenosine(37) in tRNA + (sulfur carrier)-SH + AH2 + 2 S-adenosyl-L-methionine = 2-methylsulfanyl-N(6)-dimethylallyladenosine(37) in tRNA + (sulfur carrier)-H + 5'-deoxyadenosine + L-methionine + A + S-adenosyl-L-homocysteine + 2 H(+). Its function is as follows. Catalyzes the methylthiolation of N6-(dimethylallyl)adenosine (i(6)A), leading to the formation of 2-methylthio-N6-(dimethylallyl)adenosine (ms(2)i(6)A) at position 37 in tRNAs that read codons beginning with uridine. This Microcystis aeruginosa (strain NIES-843 / IAM M-2473) protein is tRNA-2-methylthio-N(6)-dimethylallyladenosine synthase.